The primary structure comprises 219 residues: Cytochrome b6 (219 aa).

The chain crosses the membrane as a helical span at residues 32 to 52 (IFYCFGGIVLTAFIFQGASGF). Cys35 contributes to the heme c binding site. 2 residues coordinate heme b: His86 and His100. A run of 3 helical transmembrane segments spans residues 90 to 110 (SGCMVLVLILHISRVYLTGGF), 116 to 136 (LTWISGVILAVVTVSFGVTGY), and 190 to 210 (IHTFVLPLVTLVLLIVHFSLL). 2 residues coordinate heme b: His191 and His206.

Belongs to the cytochrome b family. PetB subfamily. In terms of assembly, the 4 large subunits of the cytochrome b6-f complex are cytochrome b6, subunit IV (17 kDa polypeptide, PetD), cytochrome f and the Rieske protein, while the 4 small subunits are PetG, PetL, PetM and PetN. The complex functions as a dimer. It depends on heme b as a cofactor. The cofactor is heme c.

Its subcellular location is the plastid. It localises to the chloroplast thylakoid membrane. Functionally, component of the cytochrome b6-f complex, which mediates electron transfer between photosystem II (PSII) and photosystem I (PSI), cyclic electron flow around PSI, and state transitions. The protein is Cytochrome b6 of Heterocapsa triquetra (Dinoflagellate).